Reading from the N-terminus, the 198-residue chain is Thymidine kinase (198 aa).

ATP contacts are provided by residues 9 to 16 and 85 to 88; these read GTMNSGKS and DEAQ. Glu-86 functions as the Proton acceptor in the catalytic mechanism. 4 residues coordinate Zn(2+): Cys-143, Cys-146, Cys-180, and His-183.

Belongs to the thymidine kinase family. In terms of assembly, homotetramer.

The protein resides in the cytoplasm. The enzyme catalyses thymidine + ATP = dTMP + ADP + H(+). This Streptococcus thermophilus (strain ATCC BAA-250 / LMG 18311) protein is Thymidine kinase.